The primary structure comprises 197 residues: Probable GTP-binding protein EngB (197 aa).

Residues 22-197 (TGVEVAFAGR…FKEKLDTWYQ (176 aa)) form the EngB-type G domain. Residues 30–37 (GRSNAGKS), 57–61 (GRTQL), 75–78 (DLPG), 142–145 (TKAD), and 177–179 (FSS) each bind GTP. The Mg(2+) site is built by serine 37 and threonine 59.

It belongs to the TRAFAC class TrmE-Era-EngA-EngB-Septin-like GTPase superfamily. EngB GTPase family. It depends on Mg(2+) as a cofactor.

Its function is as follows. Necessary for normal cell division and for the maintenance of normal septation. The sequence is that of Probable GTP-binding protein EngB from Francisella tularensis subsp. tularensis (strain FSC 198).